The sequence spans 342 residues: Phosphate acyltransferase (342 aa).

This sequence belongs to the PlsX family. In terms of assembly, homodimer. Probably interacts with PlsY.

The protein resides in the cytoplasm. The catalysed reaction is a fatty acyl-[ACP] + phosphate = an acyl phosphate + holo-[ACP]. It participates in lipid metabolism; phospholipid metabolism. Its function is as follows. Catalyzes the reversible formation of acyl-phosphate (acyl-PO(4)) from acyl-[acyl-carrier-protein] (acyl-ACP). This enzyme utilizes acyl-ACP as fatty acyl donor, but not acyl-CoA. This is Phosphate acyltransferase from Leuconostoc mesenteroides subsp. mesenteroides (strain ATCC 8293 / DSM 20343 / BCRC 11652 / CCM 1803 / JCM 6124 / NCDO 523 / NBRC 100496 / NCIMB 8023 / NCTC 12954 / NRRL B-1118 / 37Y).